Here is a 511-residue protein sequence, read N- to C-terminus: Phosphoenolpyruvate carboxylase (511 aa).

Belongs to the PEPCase type 2 family. In terms of assembly, homotetramer. Mg(2+) is required as a cofactor.

It carries out the reaction oxaloacetate + phosphate = phosphoenolpyruvate + hydrogencarbonate. With respect to regulation, allosterically inhibited by L-aspartate and L-malate. PEPC activity is not affected by allosteric activators of E.coli PEPC such as glucose 6-phosphate, fructose 1,6-bisphosphate, and acetyl coenzyme A. Its function is as follows. Catalyzes the irreversible beta-carboxylation of phosphoenolpyruvate (PEP) to form oxaloacetate (OAA), a four-carbon dicarboxylic acid source for the tricarboxylic acid cycle. In Saccharolobus solfataricus (strain ATCC 35092 / DSM 1617 / JCM 11322 / P2) (Sulfolobus solfataricus), this protein is Phosphoenolpyruvate carboxylase.